Reading from the N-terminus, the 306-residue chain is Protein FdhE homolog (306 aa).

This sequence belongs to the FdhE family.

It is found in the cytoplasm. In terms of biological role, necessary for formate dehydrogenase activity. The sequence is that of Protein FdhE homolog from Proteus mirabilis (strain HI4320).